We begin with the raw amino-acid sequence, 247 residues long: Leucyl/phenylalanyl-tRNA--protein transferase (247 aa).

The protein belongs to the L/F-transferase family.

The protein resides in the cytoplasm. The catalysed reaction is N-terminal L-lysyl-[protein] + L-leucyl-tRNA(Leu) = N-terminal L-leucyl-L-lysyl-[protein] + tRNA(Leu) + H(+). The enzyme catalyses N-terminal L-arginyl-[protein] + L-leucyl-tRNA(Leu) = N-terminal L-leucyl-L-arginyl-[protein] + tRNA(Leu) + H(+). It carries out the reaction L-phenylalanyl-tRNA(Phe) + an N-terminal L-alpha-aminoacyl-[protein] = an N-terminal L-phenylalanyl-L-alpha-aminoacyl-[protein] + tRNA(Phe). Its function is as follows. Functions in the N-end rule pathway of protein degradation where it conjugates Leu, Phe and, less efficiently, Met from aminoacyl-tRNAs to the N-termini of proteins containing an N-terminal arginine or lysine. The polypeptide is Leucyl/phenylalanyl-tRNA--protein transferase (Solidesulfovibrio magneticus (strain ATCC 700980 / DSM 13731 / RS-1) (Desulfovibrio magneticus)).